We begin with the raw amino-acid sequence, 509 residues long: Transmembrane protein 104 homolog (509 aa).

Residues 1 to 19 (MPRLVNGREAAPTYSNLVG) are Cytoplasmic-facing. The chain crosses the membrane as a helical span at residues 20 to 40 (FIFIFNLIVGTGALTLPGVFA). Residues 41–45 (RAGWM) are Extracellular-facing. The helical transmembrane segment at 46–66 (LSLIVIVLLAIISYMTVTFII) threads the bilayer. Topologically, residues 67 to 151 (EAMACANAIR…ATLFFNEFGR (85 aa)) are cytoplasmic. Residues 152–172 (VMFYLCLIVYLYGDLSIYSAA) traverse the membrane as a helical segment. Topologically, residues 173–218 (VARSLRDVVCDQTNGTDTNNLMYWPGDFENNTSLACWKEHTISRLN) are extracellular. 3 N-linked (GlcNAc...) asparagine glycosylation sites follow: asparagine 186, asparagine 202, and asparagine 203. A helical membrane pass occupies residues 219–239 (MYRVLLIGFTLIFGPFVYFNV). Residues 240–248 (QKTKYLQML) lie on the Cytoplasmic side of the membrane. Residues 249-269 (TAAFRWMAFTLMICISLKLLI) traverse the membrane as a helical segment. The Extracellular segment spans residues 270-277 (SRGAKGHP). A helical transmembrane segment spans residues 278–298 (ATFNVYGIPSLFGACVYSFMC). At 299 to 320 (HHSLPSLLAPIRHKSMVSKILS) the chain is on the cytoplasmic side. The chain crosses the membrane as a helical span at residues 321-341 (IDYIIICAFYILLAMTGIFAF). Residues 342–361 (ERIEDLYTLDFLPYDVAYVD) are Extracellular-facing. Residues 362–382 (FWSGLLICIDYFLALFPIFTL) traverse the membrane as a helical segment. Residues 383–411 (STSFPIVAITLKNNLQSLFLDMSQYESYS) are Cytoplasmic-facing. The chain crosses the membrane as a helical span at residues 412-432 (VILRLCFPLLAIIPPFCITYF). Topologically, residues 433-439 (TESLSSL) are extracellular. Residues 440–460 (VAFTGTYAGTGIQYIIPVFLV) form a helical membrane-spanning segment. Topologically, residues 461 to 487 (YFARRTCSELLGSGVVNRFKSPFKSSA) are cytoplasmic. A helical membrane pass occupies residues 488–508 (WLVFVFIWSILCVCLVSINLF). Serine 509 is a topological domain (extracellular).

The protein belongs to the TMEM104 family.

The protein localises to the membrane. The sequence is that of Transmembrane protein 104 homolog from Drosophila melanogaster (Fruit fly).